Here is a 445-residue protein sequence, read N- to C-terminus: Alpha/beta hydrolase psoB (445 aa).

The Nucleophile role is filled by Ser-246.

This sequence belongs to the AB hydrolase superfamily. FUS2 hydrolase family. Homodimer.

The protein operates within secondary metabolite biosynthesis. Functionally, alpha/beta hydrolase; part of the gene cluster that mediates the biosynthesis of pseurotin A, a competitive inhibitor of chitin synthase and an inducer of nerve-cell proliferation. The PKS-NRPS hybrid synthetase psoA is responsible for the biosynthesis of azaspirene, one of the first intermediates having the 1-oxa-7-azaspiro[4,4]-non-2-ene-4,6-dione core of pseurotin, via condensation of one acetyl-CoA, 4 malonyl-CoA, and a L-phenylalanine molecule. The dual-functional monooxygenase/methyltransferase psoF seems to be involved in the addition of the C3 methyl group onto the pseurotin scaffold. Azaspirene is then converted to synerazol through 4 steps including oxidation of C17 by the cytochrome P450 monooxygenase psoD, O-methylation of the hydroxy group of C8 by the methyltransferase psoC, and the trans-to-cis isomerization of the C13 olefin by the glutathione S-transferase psoE. The fourth step of synerazol production is performed by the dual-functional monooxygenase/methyltransferase psoF which seems to catalyze the epoxidation of the intermediate deepoxy-synerazol. Synerazol can be attacked by a water molecule nonenzymatically at two different positions to yield two diol products, pseurotin A and pseurotin D. The sequence is that of Alpha/beta hydrolase psoB from Aspergillus fumigatus (strain ATCC MYA-4609 / CBS 101355 / FGSC A1100 / Af293) (Neosartorya fumigata).